The following is a 503-amino-acid chain: Probable cytosol aminopeptidase (503 aa).

Residues lysine 274 and aspartate 279 each coordinate Mn(2+). Lysine 286 is a catalytic residue. Residues aspartate 297, aspartate 356, and glutamate 358 each coordinate Mn(2+). The active site involves arginine 360.

Belongs to the peptidase M17 family. Mn(2+) serves as cofactor.

Its subcellular location is the cytoplasm. It carries out the reaction Release of an N-terminal amino acid, Xaa-|-Yaa-, in which Xaa is preferably Leu, but may be other amino acids including Pro although not Arg or Lys, and Yaa may be Pro. Amino acid amides and methyl esters are also readily hydrolyzed, but rates on arylamides are exceedingly low.. The catalysed reaction is Release of an N-terminal amino acid, preferentially leucine, but not glutamic or aspartic acids.. Functionally, presumably involved in the processing and regular turnover of intracellular proteins. Catalyzes the removal of unsubstituted N-terminal amino acids from various peptides. The sequence is that of Probable cytosol aminopeptidase from Burkholderia multivorans (strain ATCC 17616 / 249).